A 134-amino-acid polypeptide reads, in one-letter code: Natriuretic peptides B (134 aa).

The first 26 residues, 1–26 (MDPQTAPSRALLLLLFLHLAFLGGRS), serve as a signal peptide directing secretion. S41 carries O-linked (Xyl...) (chondroitin sulfate) serine glycosylation. The O-linked (HexNAc...) threonine; Partial glycan is linked to T62. S63 and S70 each carry an O-linked (HexNAc...) serine glycan. T74 carries O-linked (HexNAc...) threonine glycosylation. An O-linked (HexNAc...) serine glycan is attached at S79. T84 carries O-linked (HexNAc...) threonine; Partial glycosylation. T97 is a glycosylation site (O-linked (HexNAc...) threonine). C112 and C128 are oxidised to a cystine.

The protein belongs to the natriuretic peptide family. In terms of processing, the precursor molecule is proteolytically cleaved by the endoproteases FURIN or CORIN at Arg-102 to produce brain natriuretic peptide 32 and NT-proBNP. This likely occurs after it has been secreted into the blood, either during circulation or in the target cells. CORIN also cleaves the precursor molecule at additional residues including Arg-99 and possibly Lys-105. In patients with heart failure, processing and degradation of natriuretic peptides B occurs but is delayed, possibly due to a decrease in enzyme level or activity of CORIN and DPP4. Post-translationally, undergoes further proteolytic cleavage by various proteases such as DPP4, MME and possibly FAP, to give rise to a variety of shorter peptides. Cleaved at Pro-104 by the prolyl endopeptidase FAP (seprase) activity (in vitro). Degraded by IDE. During IDE degradation, the resulting products initially increase the activation of NPR1 and can also stimulate NPR2 to produce cGMP before the fragments are completely degraded and inactivated by IDE (in vitro). O-glycosylated on at least seven residues. In cardiomyocytes, glycosylation at Thr-97 is essential for the stability and processing of the extracellular natriuretic peptides B. Glycosylation, especially at Thr-97, may also be important for brain natriuretic peptide 32 stability and/or extracellular distribution. Glycosylation at Thr-97 appears to inhibit FURIN- or CORIN-mediated proteolytic processing, at least in HEK293 cells. In terms of tissue distribution, detected in the cardiac atria (at protein level). Detected in the kidney distal tubular cells (at protein level).

The protein localises to the secreted. In terms of biological role, cardiac hormone that plays a key role in mediating cardio-renal homeostasis. May also function as a paracrine antifibrotic factor in the heart. Acts by specifically binding and stimulating NPR1 to produce cGMP, which in turn activates effector proteins that drive various biological responses. Involved in regulating the extracellular fluid volume and maintaining the fluid-electrolyte balance through natriuresis, diuresis, vasorelaxation, and inhibition of renin and aldosterone secretion. Binds the clearance receptor NPR3. May affect cardio-renal homeostasis. Able to promote the production of cGMP although its potency is very low compared to brain natriuretic peptide 32. Its function is as follows. May have a role in cardio-renal homeostasis. Able to promote the production of cGMP. The protein is Natriuretic peptides B (NPPB) of Homo sapiens (Human).